We begin with the raw amino-acid sequence, 585 residues long: Nucleoporin p58/p45 (585 aa).

A run of 5 repeats spans residues 7–8 (FG), 30–31 (FG), 42–43 (FG), 61–62 (FG), and 66–67 (FG). Residues 7–565 (FGSGTLGSTT…VSNPASAGFG (559 aa)) form a 14 X 2 AA repeats of F-G region. Residues 194 to 232 (TSAASSEGLGGIDFSTSSDKKSDKTGTRPEDSKALKDEN) form a disordered region. A compositionally biased stretch (basic and acidic residues) spans 211-232 (SDKKSDKTGTRPEDSKALKDEN). 2 coiled-coil regions span residues 242 to 262 (ENLQ…SRMS) and 300 to 367 (ETAQ…SHIT). Phosphothreonine is present on threonine 317. 9 repeat units span residues 474–475 (FG), 478–479 (FG), 499–500 (FG), 505–506 (FG), 515–516 (FG), 517–518 (FG), 531–532 (FG), 554–555 (FG), and 564–565 (FG). A disordered region spans residues 563-585 (GFGTGGQLLQLKRPPAGNKRGKR).

This sequence belongs to the NUP58 family. As to quaternary structure, component of the p62 complex, a complex composed of NUP62, NUP54, and isoform p58 and isoform p45 of NUP58. Isoform p58 interacts with NUTF2. Isoform p58 interacts with SRP1-alpha and Importin p97 proteins when they are together, but not with SRP1-alpha protein alone. In terms of processing, O-glycosylated. In terms of tissue distribution, expressed in liver.

It is found in the nucleus. The protein resides in the nuclear pore complex. The protein localises to the nucleus membrane. Functionally, component of the nuclear pore complex, a complex required for the trafficking across the nuclear membrane. This is Nucleoporin p58/p45 from Rattus norvegicus (Rat).